A 303-amino-acid polypeptide reads, in one-letter code: tRNA dimethylallyltransferase 1 (303 aa).

17–24 (GPTACGKT) contributes to the ATP binding site. Position 19 to 24 (19 to 24 (TACGKT)) interacts with substrate. The segment at 42-45 (DSRQ) is interaction with substrate tRNA.

This sequence belongs to the IPP transferase family. In terms of assembly, monomer. Mg(2+) serves as cofactor.

The catalysed reaction is adenosine(37) in tRNA + dimethylallyl diphosphate = N(6)-dimethylallyladenosine(37) in tRNA + diphosphate. In terms of biological role, catalyzes the transfer of a dimethylallyl group onto the adenine at position 37 in tRNAs that read codons beginning with uridine, leading to the formation of N6-(dimethylallyl)adenosine (i(6)A). In Hahella chejuensis (strain KCTC 2396), this protein is tRNA dimethylallyltransferase 1.